Here is a 371-residue protein sequence, read N- to C-terminus: T-cell acute lymphocytic leukemia protein 1 (371 aa).

Residues 1–71 (MMEKRQPELC…DVPLQNSSNG (71 aa)) form a disordered region. The segment covering 34-57 (GCKEDEESKREEGDKEGGGRFKGD) has biased composition (basic and acidic residues). The region spanning 204–256 (VRRIFTNSRERWRQQNVNGAFAELRKLIPTHPPDKKLSKNEILRLAMKYISFL) is the bHLH domain. Residues 263–371 (QDGGRNVSST…GRPLDGSSRR (109 aa)) form a disordered region. Positions 293–305 (HQDRVVGLARDDI) are enriched in basic and acidic residues. Acidic residues predominate over residues 321 to 335 (GDADGSPESFMEDQD).

As to expression, expressed in the main hemopoietic organs in adults, namely the kidney and the spleen. Also expressed in the liver, brain, gill and gonads.

Its subcellular location is the nucleus. Transcription factor that plays a pivotal role in hemopoietic and endothelial development. This Takifugu rubripes (Japanese pufferfish) protein is T-cell acute lymphocytic leukemia protein 1.